The following is an 833-amino-acid chain: Leucine--tRNA ligase (833 aa).

The 'HIGH' region signature appears at 41-52; the sequence is PYPSGAGLHVGH. The 'KMSKS' region motif lies at 610-614; sequence KMSKS. Position 613 (Lys613) interacts with ATP.

This sequence belongs to the class-I aminoacyl-tRNA synthetase family.

The protein resides in the cytoplasm. The enzyme catalyses tRNA(Leu) + L-leucine + ATP = L-leucyl-tRNA(Leu) + AMP + diphosphate. This chain is Leucine--tRNA ligase, found in Streptococcus equi subsp. zooepidemicus (strain H70).